A 306-amino-acid chain; its full sequence is UPF0282 protein Pars_1056 (306 aa).

This sequence belongs to the UPF0282 family.

The sequence is that of UPF0282 protein Pars_1056 from Pyrobaculum arsenaticum (strain DSM 13514 / JCM 11321 / PZ6).